A 226-amino-acid chain; its full sequence is uncharacterized protein (226 aa).

This is an uncharacterized protein from Haemophilus influenzae (strain ATCC 51907 / DSM 11121 / KW20 / Rd).